A 221-amino-acid polypeptide reads, in one-letter code: MEDSPLPDLRDIELKLGRKVPESLARSLRGEELAPREGAADPSGVGGSCSSSSSCSSFAPSVSSSSSSSPASGSPRRSHPSALERLETKLHILRQEMVNLRATDVRLMRQLLLINESIESIKWMIEEKATITSRGSSLSGSLCSLLESQSTSLRGSYNSLHDGSDGLDGISVGSYLDTLADDVPGHQTPSDLDQFSDSSIIEDSQALHKHPKLDSEYYCFG.

N-acetylmethionine is present on methionine 1. Residues 24–81 (LARSLRGEELAPREGAADPSGVGGSCSSSSSCSSFAPSVSSSSSSSPASGSPRRSHPS) are disordered. Over residues 28–39 (LRGEELAPREGA) the composition is skewed to basic and acidic residues. Positions 48 to 75 (SCSSSSSCSSFAPSVSSSSSSSPASGSP) are enriched in low complexity.

The chain is Leucine rich adaptor protein 1-like (Lurap1l) from Mus musculus (Mouse).